The primary structure comprises 164 residues: Phosphopantetheine adenylyltransferase (164 aa).

Ser-9 provides a ligand contact to substrate. ATP contacts are provided by residues 9 to 10 (SF) and His-17. Residues Lys-41, Leu-78, and Arg-92 each contribute to the substrate site. ATP-binding positions include 93-95 (GLR), Glu-103, and 128-134 (GRVITST).

The protein belongs to the bacterial CoaD family. In terms of assembly, homohexamer. The cofactor is Mg(2+).

It localises to the cytoplasm. The enzyme catalyses (R)-4'-phosphopantetheine + ATP + H(+) = 3'-dephospho-CoA + diphosphate. It participates in cofactor biosynthesis; coenzyme A biosynthesis; CoA from (R)-pantothenate: step 4/5. Functionally, reversibly transfers an adenylyl group from ATP to 4'-phosphopantetheine, yielding dephospho-CoA (dPCoA) and pyrophosphate. In Bartonella bacilliformis (strain ATCC 35685 / KC583 / Herrer 020/F12,63), this protein is Phosphopantetheine adenylyltransferase.